The chain runs to 334 residues: DNA-directed RNA polymerase subunit alpha (334 aa).

The interval 1–232 is alpha N-terminal domain (alpha-NTD); it reads MVREEIAVST…IDLFIPFLHA (232 aa). Residues 268 to 334 are alpha C-terminal domain (alpha-CTD); that stretch reads GIALKCIFID…ILQKHFTIDC (67 aa).

The protein belongs to the RNA polymerase alpha chain family. In plastids the minimal PEP RNA polymerase catalytic core is composed of four subunits: alpha, beta, beta', and beta''. When a (nuclear-encoded) sigma factor is associated with the core the holoenzyme is formed, which can initiate transcription.

The protein localises to the plastid. The protein resides in the chloroplast. The enzyme catalyses RNA(n) + a ribonucleoside 5'-triphosphate = RNA(n+1) + diphosphate. Functionally, DNA-dependent RNA polymerase catalyzes the transcription of DNA into RNA using the four ribonucleoside triphosphates as substrates. The protein is DNA-directed RNA polymerase subunit alpha of Chloranthus spicatus (Chulantree).